Reading from the N-terminus, the 365-residue chain is 2-aminoethylphosphonate--pyruvate transaminase (365 aa).

Residue K194 is modified to N6-(pyridoxal phosphate)lysine.

The protein belongs to the class-V pyridoxal-phosphate-dependent aminotransferase family. PhnW subfamily. As to quaternary structure, homodimer. Requires pyridoxal 5'-phosphate as cofactor.

It carries out the reaction (2-aminoethyl)phosphonate + pyruvate = phosphonoacetaldehyde + L-alanine. In terms of biological role, involved in phosphonate degradation. The polypeptide is 2-aminoethylphosphonate--pyruvate transaminase (Bacillus cereus (strain ATCC 10987 / NRS 248)).